A 274-amino-acid polypeptide reads, in one-letter code: Penicillin-insensitive murein endopeptidase (274 aa).

Positions 1 to 19 are cleaved as a signal peptide; it reads MKKTVIALLAWFVSSASLA. Cystine bridges form between Cys-44–Cys-265, Cys-187–Cys-235, and Cys-216–Cys-223. Residues His-110, His-113, Asp-120, Asp-147, His-150, and His-211 each coordinate Zn(2+). The interval 225 to 274 is disordered; that stretch reads DQPLPPPGDGCGAELQSWFEPPKPGTTKPEKKTPPPLPPSCQALLDEHVL.

The protein belongs to the peptidase M74 family. As to quaternary structure, dimer. Zn(2+) is required as a cofactor.

The protein resides in the periplasm. Functionally, murein endopeptidase that cleaves the D-alanyl-meso-2,6-diamino-pimelyl amide bond that connects peptidoglycan strands. Likely plays a role in the removal of murein from the sacculus. The sequence is that of Penicillin-insensitive murein endopeptidase from Salmonella paratyphi C (strain RKS4594).